A 473-amino-acid polypeptide reads, in one-letter code: Reticulon-4 receptor (473 aa).

A signal peptide spans 1-26; that stretch reads MKRASAGGSRLLAWVLWLQAWQVAAP. Intrachain disulfides connect C27/C33 and C31/C43. In terms of domain architecture, LRRNT spans 27–54; sequence CPGACVCYNEPKVTTSCPQQGLQAVPVG. 9 LRR repeats span residues 55–79, 81–103, 104–128, 129–152, 153–176, 178–200, 202–224, 225–248, and 250–273; these read IPAASQRIFLHGNRISHVPAASFRA, RNLTILWLHSNVLARIDAAAFTG, LALLEQLDLSDNAQLRSVDPATFHG, LGRLHTLHLDRCGLQELGPGLFRG, LAALQYLYLQDNALQALPDDTFRD, GNLTHLFLHGNRISSVPERAFRG, HSLDRLLLHQNRVAHVHPHAFRD, LGRLMTLYLFANNLSALPTEALAP, and RALQYLRLNDNPWVCDCRARPLWA. An N-linked (GlcNAc...) asparagine glycan is attached at N82. Residue N179 is glycosylated (N-linked (GlcNAc...) asparagine). Positions 260 to 310 constitute an LRRCT domain; that stretch reads NPWVCDCRARPLWAWLQKFRGSSSEVPCSLPQRLAGRDLKRLAANDLQGCA. Disulfide bonds link C264–C287, C266–C335, and C309–C336. Residues 346 to 447 are disordered; sequence VLEPGRPASA…GGGTGDSEGS (102 aa). Positions 413-429 are enriched in basic residues; it reads PRRRPGCSRKNRTRSHC. Residues 434–445 are compositionally biased toward gly residues; it reads AGSGGGGTGDSE. S447 is lipidated: GPI-anchor amidated serine. Positions 448–473 are cleaved as a propeptide — removed in mature form; it reads GALPSLTCSLTPLGLALVLWTVLGPC.

The protein belongs to the Nogo receptor family. Homodimer. Interacts with MAG. Interacts with RTN4. Interacts with NGFR. Interacts with LINGO1. Interacts with KIAA0319L. Interacts with OLFM1; this inhibits interaction with LINGO1 and NGFR. Interacts with OMG. Post-translationally, N-glycosylated. O-glycosylated. Contains terminal sialic acid groups on its glycan chains. In terms of tissue distribution, widespread in the brain but highest levels in the gray matter. Low levels in heart and kidney; not expressed in oligodendrocytes (white matter).

The protein localises to the cell membrane. Its subcellular location is the membrane raft. It is found in the cell projection. The protein resides in the dendrite. It localises to the axon. The protein localises to the perikaryon. In terms of biological role, receptor for RTN4, OMG and MAG. Functions as a receptor for the sialylated gangliosides GT1b and GM1. Besides, functions as a receptor for chondroitin sulfate proteoglycans. Can also bind heparin. Intracellular signaling cascades are triggered via the coreceptor NGFR. Signaling mediates activation of Rho and downstream reorganization of the actin cytoskeleton. Mediates axonal growth inhibition. Plays a role in regulating axon regeneration and neuronal plasticity in the adult central nervous system. Plays a role in postnatal brain development. Required for normal axon migration across the brain midline and normal formation of the corpus callosum. Protects motoneurons against apoptosis; protection against apoptosis is probably mediated via interaction with MAG. Acts in conjunction with RTN4 and LINGO1 in regulating neuronal precursor cell motility during cortical development. Like other family members, plays a role in restricting the number dendritic spines and the number of synapses that are formed during brain development. The chain is Reticulon-4 receptor (RTN4R) from Homo sapiens (Human).